Reading from the N-terminus, the 61-residue chain is Probradykinin-2 (61 aa).

Positions 1–22 (MSFLKKSLFLVLFLGLVSFSIC) are cleaved as a signal peptide. The propeptide occupies 23–50 (EEEKRETEEEENEDEIEEQSEEKKRFEP). The segment at 24–61 (EEKRETEEEENEDEIEEQSEEKKRFEPVPPGFTPFRQT) is disordered. Residues 30 to 42 (EEEENEDEIEEQS) show a composition bias toward acidic residues. A 4-hydroxyproline modification is found at P52.

This sequence belongs to the frog skin active peptide (FSAP) family. Bradykinin-related peptide subfamily. As to expression, expressed by the skin glands.

The protein resides in the secreted. Its function is as follows. May produce in vitro relaxation of rat arterial smooth muscle and constriction of intestinal smooth muscle. May target bradykinin receptors (BDKRB). This chain is Probradykinin-2, found in Pithecopus azureus (Orange-legged monkey tree frog).